Here is a 349-residue protein sequence, read N- to C-terminus: N-formyl peptide receptor 3 (349 aa).

The Extracellular segment spans residues 1–27 (METNFSIPLNETEEVLPEPAGHTVLWI). N-linked (GlcNAc...) asparagine glycans are attached at residues Asn4 and Asn10. The chain crosses the membrane as a helical span at residues 28-50 (FSLLVHGVTFVFGVLGNGLVIWV). Residues 51-61 (AGFRMTRTVNT) lie on the Cytoplasmic side of the membrane. A helical transmembrane segment spans residues 62–83 (ICYLNLALADFSFSAILPFRMV). The Extracellular portion of the chain corresponds to 84 to 100 (SVAMREKWPFGSFLCKL). The cysteines at positions 98 and 176 are disulfide-linked. Residues 101-121 (VHVMIDINLFVSVYLITIIAL) form a helical membrane-spanning segment. The Cytoplasmic segment spans residues 122-140 (DRCICVLHPAWAQNHRTMS). A helical membrane pass occupies residues 141-162 (LAKRVMTGLWILTIVLTLPNFI). Residues 163–205 (FWTTIRTTNGDTYCIFNFAFWGDTAVERLNVFITMAKVFLILH) lie on the Extracellular side of the membrane. A helical membrane pass occupies residues 206–226 (FIIGFSMPMSIITVCYGIIAA). Residues 227 to 242 (KIHRNHMIKSSRPLRV) are Cytoplasmic-facing. The helical transmembrane segment at 243–266 (FAAVVASFFICWFPYELIGILMAV) threads the bilayer. Residues 267–286 (WLKEMLLNGKYKIILVLINP) lie on the Extracellular side of the membrane. The chain crosses the membrane as a helical span at residues 287 to 306 (TSSLAFFNSCLNPILYVFMG). Topologically, residues 307–349 (RNFQERLIRSLPTSLERALTEVPDSAQTSNTHTTSASPPEETE) are cytoplasmic. A disordered region spans residues 327-349 (EVPDSAQTSNTHTTSASPPEETE). A compositionally biased stretch (polar residues) spans 331–343 (SAQTSNTHTTSAS).

This sequence belongs to the G-protein coupled receptor 1 family.

It localises to the cell membrane. Functionally, low affinity receptor for N-formyl-methionyl peptides, which are powerful neutrophils chemotactic factors. Binding of FMLP to the receptor causes activation of neutrophils. This response is mediated via a G-protein that activates a phosphatidylinositol-calcium second messenger system. The polypeptide is N-formyl peptide receptor 3 (FPR3) (Pan troglodytes (Chimpanzee)).